A 222-amino-acid chain; its full sequence is Non-structural protein V (222 aa).

The tract at residues 61–107 is disordered; that stretch reads ESTNHQKGSVGGGAKPKKPRPKIAIVPADDKTVPGKPIPNPLLGLDS. Residues His171, Cys190, Cys194, Cys206, Cys208, Cys211, Cys215, and Cys218 each coordinate Zn(2+).

Belongs to the paramyxoviruses V protein family. Interacts with host DDB1, STAT2 and IFIH1/MDA5. Interacts with host RIGI regulatory protein (via CARDs domain) and host TRIM25 (via SPRY domain); these interactions prevent TRIM25-mediated ubiquitination of RIG-I and disrupts downstream RIG-I signaling.

The protein resides in the host cytoplasm. Plays an essential role in the inhibition of host immune response. Prevents the establishment of cellular antiviral state by blocking interferon-alpha/beta (IFN-alpha/beta) production and signaling pathway. Interacts with host IFIH1/MDA5 and DHX58/LGP2 to inhibit the transduction pathway involved in the activation of IFN-beta promoter, thus protecting the virus against cell antiviral state. Efficiently blocks type I IFN signaling following infection by behaving as a substrate receptor for CUL4-DDB1 E3 ligase complex and targeting host STAT1 for proteasomal degradation. Blocks the type I interferon signaling pathway by disrupting the RIG-I signaling pathway. The chain is Non-structural protein V (P/V) from Parainfluenza virus 5 (strain W3) (PIV5).